Here is a 398-residue protein sequence, read N- to C-terminus: Leucine carboxyl methyltransferase 1 (398 aa).

Positions 1–11 (MSASQIPNLNT) are enriched in polar residues. The tract at residues 1 to 54 (MSASQIPNLNTLRRGGGRGRLRGRGGFETGAPSEDRHGSRGLAAQDRVVQGTDN) is disordered. S-adenosyl-L-methionine contacts are provided by residues Arg-97, Gly-123, Asp-151, and 201–202 (DL). A compositionally biased stretch (low complexity) spans 208–218 (SGSATTSRSPS). The tract at residues 208 to 232 (SGSATTSRSPSSPNPAEKDQPPCPL) is disordered. Glu-246 contacts S-adenosyl-L-methionine.

Belongs to the methyltransferase superfamily. LCMT family.

The catalysed reaction is [phosphatase 2A protein]-C-terminal L-leucine + S-adenosyl-L-methionine = [phosphatase 2A protein]-C-terminal L-leucine methyl ester + S-adenosyl-L-homocysteine. Functionally, methylates the carboxyl group of the C-terminal leucine residue of protein phosphatase 2A catalytic subunits to form alpha-leucine ester residues. This Aspergillus fumigatus (strain ATCC MYA-4609 / CBS 101355 / FGSC A1100 / Af293) (Neosartorya fumigata) protein is Leucine carboxyl methyltransferase 1 (ppm1).